Here is a 392-residue protein sequence, read N- to C-terminus: Phosphoglycerate kinase (392 aa).

Substrate is bound by residues 19-21 (DYN), arginine 34, 57-60 (HLGR), arginine 116, and arginine 149. Residues lysine 199, glutamate 321, and 347–350 (GGDS) contribute to the ATP site.

It belongs to the phosphoglycerate kinase family. As to quaternary structure, monomer.

The protein localises to the cytoplasm. It carries out the reaction (2R)-3-phosphoglycerate + ATP = (2R)-3-phospho-glyceroyl phosphate + ADP. It functions in the pathway carbohydrate degradation; glycolysis; pyruvate from D-glyceraldehyde 3-phosphate: step 2/5. In Thermomicrobium roseum (strain ATCC 27502 / DSM 5159 / P-2), this protein is Phosphoglycerate kinase.